We begin with the raw amino-acid sequence, 75 residues long: UPF0291 protein lin1342 (75 aa).

A disordered region spans residues 55 to 75 (IDPKGNDVTPHKIKQMRKNKK). Residues 65–75 (HKIKQMRKNKK) are compositionally biased toward basic residues.

The protein belongs to the UPF0291 family.

Its subcellular location is the cytoplasm. The protein is UPF0291 protein lin1342 of Listeria innocua serovar 6a (strain ATCC BAA-680 / CLIP 11262).